The primary structure comprises 263 residues: Endonuclease 8 (263 aa).

Residue P2 is the Schiff-base intermediate with DNA of the active site. E3 (proton donor) is an active-site residue. K53 functions as the Proton donor; for beta-elimination activity in the catalytic mechanism. DNA-binding residues include Q70, R125, and N169. Residues 229–263 (KVFHRDGERCERCGGVIEKTTLSSRPFYWCPGCQH) form an FPG-type zinc finger. The active-site Proton donor; for delta-elimination activity is R253.

The protein belongs to the FPG family. Requires Zn(2+) as cofactor.

It catalyses the reaction 2'-deoxyribonucleotide-(2'-deoxyribose 5'-phosphate)-2'-deoxyribonucleotide-DNA = a 3'-end 2'-deoxyribonucleotide-(2,3-dehydro-2,3-deoxyribose 5'-phosphate)-DNA + a 5'-end 5'-phospho-2'-deoxyribonucleoside-DNA + H(+). Involved in base excision repair of DNA damaged by oxidation or by mutagenic agents. Acts as a DNA glycosylase that recognizes and removes damaged bases. Has a preference for oxidized pyrimidines, such as thymine glycol, 5,6-dihydrouracil and 5,6-dihydrothymine. Has AP (apurinic/apyrimidinic) lyase activity and introduces nicks in the DNA strand. Cleaves the DNA backbone by beta-delta elimination to generate a single-strand break at the site of the removed base with both 3'- and 5'-phosphates. This is Endonuclease 8 from Klebsiella pneumoniae (strain 342).